Consider the following 309-residue polypeptide: Tagatose-6-phosphate kinase (309 aa).

The protein belongs to the carbohydrate kinase PfkB family. LacC subfamily.

It carries out the reaction D-tagatofuranose 6-phosphate + ATP = D-tagatofuranose 1,6-bisphosphate + ADP + H(+). It functions in the pathway carbohydrate metabolism; D-tagatose 6-phosphate degradation; D-glyceraldehyde 3-phosphate and glycerone phosphate from D-tagatose 6-phosphate: step 1/2. This is Tagatose-6-phosphate kinase from Streptococcus sanguinis (strain SK36).